A 142-amino-acid chain; its full sequence is MPNGKYAAHRLQQVRKDARWKDTGYSRRTLGLDIKSDPLSGAPQGRGIVLEKVGVEAKQPNSAIRKCVRIQLIKNGRQATAFCPGDGAINFIDEHDEVTVERIGGRMGGAMGDIPGVRFKVIAVNNVSLREMVIGRKEKPRR.

It belongs to the universal ribosomal protein uS12 family. In terms of assembly, part of the 30S ribosomal subunit.

With S4 and S5 plays an important role in translational accuracy. Located at the interface of the 30S and 50S subunits. The polypeptide is Small ribosomal subunit protein uS12 (Methanococcoides burtonii (strain DSM 6242 / NBRC 107633 / OCM 468 / ACE-M)).